A 727-amino-acid polypeptide reads, in one-letter code: Polyphosphate kinase (727 aa).

Asparagine 82 contacts ATP. The Mg(2+) site is built by arginine 412 and arginine 442. Histidine 472 functions as the Phosphohistidine intermediate in the catalytic mechanism. ATP is bound by residues tyrosine 505, arginine 601, and histidine 629.

It belongs to the polyphosphate kinase 1 (PPK1) family. Mg(2+) serves as cofactor. In terms of processing, an intermediate of this reaction is the autophosphorylated ppk in which a phosphate is covalently linked to a histidine residue through a N-P bond.

The catalysed reaction is [phosphate](n) + ATP = [phosphate](n+1) + ADP. Functionally, catalyzes the reversible transfer of the terminal phosphate of ATP to form a long-chain polyphosphate (polyP). The protein is Polyphosphate kinase of Pseudomonas putida (strain ATCC 47054 / DSM 6125 / CFBP 8728 / NCIMB 11950 / KT2440).